The following is a 142-amino-acid chain: Putative pre-16S rRNA nuclease (142 aa).

It belongs to the YqgF nuclease family.

The protein resides in the cytoplasm. Functionally, could be a nuclease involved in processing of the 5'-end of pre-16S rRNA. This chain is Putative pre-16S rRNA nuclease, found in Desulfitobacterium hafniense (strain DSM 10664 / DCB-2).